Consider the following 396-residue polypeptide: Deoxyuridine 5'-triphosphate nucleotidohydrolase (396 aa).

Residues Arg280–Ser282 and Phe380–Gly381 each bind substrate.

This sequence belongs to the dUTPase family. Requires Mg(2+) as cofactor.

It carries out the reaction dUTP + H2O = dUMP + diphosphate + H(+). Its function is as follows. Involved in nucleotide metabolism: produces dUMP, the immediate precursor of thymidine nucleotides and decreases the intracellular concentration of dUTP to avoid uracil incorporation into viral DNA. This is Deoxyuridine 5'-triphosphate nucleotidohydrolase from Homo sapiens (Human).